A 71-amino-acid chain; its full sequence is Conotoxin Vc6.12 (71 aa).

A signal peptide spans 1–19 (MQKLIILLLVAAVLMSTQA). A propeptide spanning residues 20-43 (LFQEKRPMKKINFLSKGKTDAEKQ) is cleaved from the precursor. 3 disulfides stabilise this stretch: Cys48-Cys62, Cys55-Cys66, and Cys61-Cys70.

The protein belongs to the conotoxin O2 superfamily. Expressed by the venom duct.

Its subcellular location is the secreted. Inhibits voltage-gated ion channels. The polypeptide is Conotoxin Vc6.12 (Conus victoriae (Queen Victoria cone)).